The sequence spans 154 residues: Transcriptional repressor NrdR (154 aa).

A zinc finger lies at 3 to 34; it reads CPFCRHPDSRVVDSREADEGQAIRRRRSCPEC. The ATP-cone domain maps to 46–136; it reads LSVVKRSGVT…VYRSFSSAED (91 aa).

It belongs to the NrdR family. Zn(2+) serves as cofactor.

Negatively regulates transcription of bacterial ribonucleotide reductase nrd genes and operons by binding to NrdR-boxes. The polypeptide is Transcriptional repressor NrdR (Rhodococcus jostii (strain RHA1)).